The sequence spans 301 residues: uncharacterized protein (301 aa).

This is an uncharacterized protein from Methanocaldococcus jannaschii (strain ATCC 43067 / DSM 2661 / JAL-1 / JCM 10045 / NBRC 100440) (Methanococcus jannaschii).